We begin with the raw amino-acid sequence, 302 residues long: Forkhead box protein R2 (302 aa).

Residues 183-285 (RPPLNYSHLV…RVLAYARRES (103 aa)) constitute a DNA-binding region (fork-head).

The protein localises to the nucleus. This chain is Forkhead box protein R2 (Foxr2), found in Mus musculus (Mouse).